The following is a 265-amino-acid chain: Thiazole synthase (265 aa).

Lys-103 acts as the Schiff-base intermediate with DXP in catalysis. 1-deoxy-D-xylulose 5-phosphate contacts are provided by residues Gly-164, 190–191 (AG), and 212–213 (NT).

Belongs to the ThiG family. Homotetramer. Forms heterodimers with either ThiH or ThiS.

The protein resides in the cytoplasm. The enzyme catalyses [ThiS sulfur-carrier protein]-C-terminal-Gly-aminoethanethioate + 2-iminoacetate + 1-deoxy-D-xylulose 5-phosphate = [ThiS sulfur-carrier protein]-C-terminal Gly-Gly + 2-[(2R,5Z)-2-carboxy-4-methylthiazol-5(2H)-ylidene]ethyl phosphate + 2 H2O + H(+). Its pathway is cofactor biosynthesis; thiamine diphosphate biosynthesis. Catalyzes the rearrangement of 1-deoxy-D-xylulose 5-phosphate (DXP) to produce the thiazole phosphate moiety of thiamine. Sulfur is provided by the thiocarboxylate moiety of the carrier protein ThiS. In vitro, sulfur can be provided by H(2)S. In Bordetella pertussis (strain Tohama I / ATCC BAA-589 / NCTC 13251), this protein is Thiazole synthase.